A 3750-amino-acid polypeptide reads, in one-letter code: Cubilin homolog (3750 aa).

Positions 1–28 (MEGAARSRLLLCWTLLAIITDTWPIAEG) are cleaved as a signal peptide. N-linked (GlcNAc...) asparagine glycosylation is found at asparagine 51 and asparagine 123. The region spanning 154 to 190 (EANSCASGPCENGGTCYNTYTGFRCQCRSAFEGTKCE) is the EGF-like 1 domain. Cystine bridges form between cysteine 158–cysteine 169, cysteine 163–cysteine 178, cysteine 180–cysteine 189, cysteine 196–cysteine 212, cysteine 206–cysteine 221, and cysteine 223–cysteine 232. Residues 192–233 (DVNECALYEGTDLGCQNGGQCQNHFGTYSCLCQPGWHGMHCT) enclose the EGF-like 2; calcium-binding domain. Positions 282–308 (DVDECSDSAAHKPCSTSCINLPGSFTC) constitute an EGF-like 3; calcium-binding domain. The region spanning 324-352 (DLDECQTNNGGCSLSPKVDCINTYGSYHC) is the EGF-like 4; calcium-binding domain. An N-linked (GlcNAc...) asparagine glycan is attached at asparagine 424. EGF-like domains are found at residues 426 to 463 (TTTN…PICE) and 465 to 503 (QPSP…RLCE). Cystine bridges form between cysteine 430–cysteine 441, cysteine 435–cysteine 451, cysteine 453–cysteine 462, cysteine 469–cysteine 480, cysteine 474–cysteine 491, cysteine 493–cysteine 502, and cysteine 509–cysteine 535. Residue asparagine 448 is glycosylated (N-linked (GlcNAc...) asparagine). 13 consecutive CUB domains span residues 509–623 (CNGM…WNSM), 627–738 (CGGR…YSVE), 744–852 (CGGV…YRMA), 853–971 (CDYK…YRAL), 978–1095 (CGGV…YTFE), 1100–1212 (CGGH…WRIF), 1216–1331 (CGGS…YKAN), 1332–1434 (CIRN…QLDY), 1439–1550 (CMEE…YRTV), 1554–1670 (CGGK…FHES), 1671–1788 (CGQT…YMTM), 1792–1902 (CGSI…YNYE), and 1903–2001 (HHNE…WNRL). N-linked (GlcNAc...) asparagine glycans are attached at residues asparagine 542 and asparagine 548. Cysteine 562 and cysteine 584 are disulfide-bonded. Asparagine 609 is a glycosylation site (N-linked (GlcNAc...) asparagine). Disulfide bonds link cysteine 627/cysteine 654, cysteine 681/cysteine 701, cysteine 744/cysteine 770, cysteine 853/cysteine 879, cysteine 913/cysteine 933, and cysteine 978/cysteine 1004. Asparagine 871 carries N-linked (GlcNAc...) asparagine glycosylation. Positions 1026, 1034, and 1080 each coordinate Ca(2+). A disulfide bond links cysteine 1031 and cysteine 1058. Cysteines 1100 and 1126 form a disulfide. N-linked (GlcNAc...) asparagine glycosylation is present at asparagine 1119. Position 1148 (glutamate 1148) interacts with Ca(2+). Asparagine 1152 carries an N-linked (GlcNAc...) asparagine glycan. Residues cysteine 1153 and cysteine 1175 are joined by a disulfide bond. Ca(2+) contacts are provided by aspartate 1156 and aspartate 1197. Cysteine 1216 and cysteine 1242 are disulfide-bonded. Glutamate 1264, aspartate 1272, and aspartate 1316 together coordinate Ca(2+). Cysteines 1269 and 1292 form a disulfide. A disulfide bridge links cysteine 1332 with cysteine 1360. 4 N-linked (GlcNAc...) asparagine glycosylation sites follow: asparagine 1335, asparagine 1359, asparagine 1413, and asparagine 1424. Cysteine 1439 and cysteine 1465 are joined by a disulfide. A glycan (N-linked (GlcNAc...) asparagine) is linked at asparagine 1491. Cystine bridges form between cysteine 1492-cysteine 1513, cysteine 1554-cysteine 1580, cysteine 1607-cysteine 1631, cysteine 1671-cysteine 1697, cysteine 1733-cysteine 1755, cysteine 1792-cysteine 1818, and cysteine 1845-cysteine 1866. N-linked (GlcNAc...) asparagine glycosylation is present at asparagine 1694. 2 N-linked (GlcNAc...) asparagine glycosylation sites follow: asparagine 1908 and asparagine 2009. 2 disulfides stabilise this stretch: cysteine 2019/cysteine 2048 and cysteine 2077/cysteine 2100. CUB domains follow at residues 2019 to 2139 (CGNQ…VRTA), 2140 to 2256 (CGSE…FRFE), 2262 to 2383 (DSGR…LSVA), 2385 to 2512 (CGGS…YTSL), and 2516 to 2646 (CGET…MNEV). 4 N-linked (GlcNAc...) asparagine glycosylation sites follow: asparagine 2092, asparagine 2128, asparagine 2152, and asparagine 2231. A disulfide bridge links cysteine 2140 with cysteine 2167. Cysteines 2324 and 2346 form a disulfide. Asparagine 2377 is a glycosylation site (N-linked (GlcNAc...) asparagine). The cysteines at positions 2385 and 2416 are disulfide-linked. The N-linked (GlcNAc...) asparagine glycan is linked to asparagine 2442. Intrachain disulfides connect cysteine 2445–cysteine 2474 and cysteine 2516–cysteine 2542. Residues asparagine 2655, asparagine 2671, asparagine 2682, and asparagine 2772 are each glycosylated (N-linked (GlcNAc...) asparagine). 2 disulfides stabilise this stretch: cysteine 2761-cysteine 2790 and cysteine 2837-cysteine 2859. CUB domains lie at 2761–2895 (CGGV…IKYG), 2898–3010 (CGGK…FERN), 3011–3128 (CGGL…YTSR), 3130–3246 (CGGI…VRVM), 3249–3364 (CDEK…INAI), 3368–3512 (CGSS…VALN), 3522–3615 (LQGR…YLAS), and 3623–3736 (CGGQ…FAGV). Asparagine 2885 and asparagine 2889 each carry an N-linked (GlcNAc...) asparagine glycan. 2 disulfides stabilise this stretch: cysteine 2898–cysteine 2921 and cysteine 2949–cysteine 2973. 3 N-linked (GlcNAc...) asparagine glycosylation sites follow: asparagine 2960, asparagine 2965, and asparagine 2982. A disulfide bridge links cysteine 3011 with cysteine 3039. Residues asparagine 3040 and asparagine 3074 are each glycosylated (N-linked (GlcNAc...) asparagine). Cystine bridges form between cysteine 3070-cysteine 3092 and cysteine 3130-cysteine 3157. A glycan (N-linked (GlcNAc...) asparagine) is linked at asparagine 3160. Disulfide bonds link cysteine 3184–cysteine 3207, cysteine 3249–cysteine 3278, cysteine 3305–cysteine 3327, and cysteine 3368–cysteine 3402. The N-linked (GlcNAc...) asparagine glycan is linked to asparagine 3256. N-linked (GlcNAc...) asparagine glycosylation occurs at asparagine 3427. The cysteines at positions 3430 and 3475 are disulfide-linked. N-linked (GlcNAc...) asparagine glycans are attached at residues asparagine 3543, asparagine 3572, and asparagine 3645. Intrachain disulfides connect cysteine 3560–cysteine 3579, cysteine 3623–cysteine 3649, and cysteine 3676–cysteine 3699.

As to expression, specifically expressed in nephrocytes.

It localises to the cell membrane. Functionally, required in the nephrocyte for normal uptake of proteins and elimination of toxins, and for maintenance of endocytic trafficking structures. May function together with Amnionless. The sequence is that of Cubilin homolog from Drosophila melanogaster (Fruit fly).